The sequence spans 306 residues: Probable cobalamin biosynthesis protein CobD (306 aa).

A run of 6 helical transmembrane segments spans residues 17–37, 54–74, 88–108, 155–175, 207–227, and 286–306; these read IGEPPEKVHPVIFIGKLIIFF, LFGFFNVILVLAIVFFMAYEI, ISLYSIILSFSIGHKSLIEFS, ITDSIIAPLIYVAIFGLPGAF, ILNFIPSRIAGMLLIITAPFY, and SLKAVDYSVLLFLIIYTVLLM.

The protein belongs to the CobD/CbiB family.

The protein localises to the cell membrane. It participates in cofactor biosynthesis; adenosylcobalamin biosynthesis. Its function is as follows. Converts cobyric acid to cobinamide by the addition of aminopropanol on the F carboxylic group. This chain is Probable cobalamin biosynthesis protein CobD, found in Methanococcus maripaludis (strain C5 / ATCC BAA-1333).